We begin with the raw amino-acid sequence, 470 residues long: Uronate isomerase (470 aa).

Belongs to the metallo-dependent hydrolases superfamily. Uronate isomerase family.

The enzyme catalyses D-glucuronate = D-fructuronate. It catalyses the reaction aldehydo-D-galacturonate = keto-D-tagaturonate. It participates in carbohydrate metabolism; pentose and glucuronate interconversion. This chain is Uronate isomerase, found in Shigella boydii serotype 18 (strain CDC 3083-94 / BS512).